The following is a 430-amino-acid chain: Functional amyloid transporter FapF (430 aa).

The first 24 residues, 1–24 (MHRSLSLRAVVCLSTLLPASLLYA), serve as a signal peptide directing secretion. Over 25–131 (APDVDIETLK…EASGFFGNGK (107 aa)) the chain is Periplasmic. Residues 29–64 (DIETLKQELLELKQRYEAQQKALAVLEQRVRQVEDQ) are a coiled coil. The interval 62 to 114 (EDQPATPAPKRLAKSPADFKQSGSTVAASSGTGGATGGSSYGQSLKDDSEPAQ) is disordered. Over residues 92–101 (GTGGATGGSS) the composition is skewed to gly residues. Residues 113–125 (AQSVSNLYNEASG) form an alpha helical plug region. The beta stranded transmembrane segment at 132-142 (FSFETGITYAR) threads the bilayer. Over 143–172 (YDARQLTLNGFLALDSIFLGNINLDRIKAD) the chain is Extracellular. The beta stranded transmembrane segment at 173–183 (NWTLDLTGRYN) threads the bilayer. The Periplasmic segment spans residues 184 to 189 (LDNRWQ). Residues 190-198 (FDVNVPVVY) traverse the membrane as a beta stranded segment. The Extracellular portion of the chain corresponds to 199-224 (RESTYQSGGASGGDPQATSEESVSRD). The interval 203-223 (YQSGGASGGDPQATSEESVSR) is disordered. The chain crosses the membrane as a beta stranded span at residues 225–238 (PTIGDVNFGIAYKF). Over 239–246 (LDESATMP) the chain is Periplasmic. Residues 247–256 (DAVVSVRVKA) traverse the membrane as a beta stranded segment. Residues 257 to 288 (PTGKEPFGIKLVRSTANDNLYVPESLPTGNGV) are Extracellular-facing. The beta stranded transmembrane segment at 289-298 (WSITPGLSLV) threads the bilayer. Residues 299-304 (KTFDPA) lie on the Periplasmic side of the membrane. Residues 305-314 (VLFGSVSYTH) form a beta stranded membrane-spanning segment. Residues 315–339 (NLEDSFDDISSDVNQKVGGKVRLGD) lie on the Extracellular side of the membrane. A beta stranded transmembrane segment spans residues 340–348 (SFQFGVGVA). Residues 349 to 356 (FALNERMS) lie on the Periplasmic side of the membrane. Residues 357-365 (MSFSVSDLI) traverse the membrane as a beta stranded segment. Over 366 to 386 (QRKSKLKPDGGGWQSIVSSDA) the chain is Extracellular. Residues 387–397 (NAGYFNVGMTI) traverse the membrane as a beta stranded segment. Residues 398-404 (AASENLT) lie on the Periplasmic side of the membrane. Residues 405–412 (IVPNLAIG) form a beta stranded membrane-spanning segment. The Extracellular portion of the chain corresponds to 413-419 (MTDDAPD). Residues 420–428 (FTFSLKFPY) traverse the membrane as a beta stranded segment. Residues 429-430 (YF) lie on the Periplasmic side of the membrane.

It belongs to the amyloid transporter (TC 9.B.153) family. In terms of assembly, homotrimer.

Its subcellular location is the cell outer membrane. Its function is as follows. Transports fibril components across the outer membrane. Upon overexpression of the endogenous six-gene locus (fapA-fapF) in situ cells form large clumps during liquid growth, make large amounts of biofilm and produce amyloid fibrils. Expression of the 6 gene operon in E.coli strain BL21(DE3) induces flocculation and biofilm formation with copious extracellular fibrils. This chain is Functional amyloid transporter FapF, found in Pseudomonas fluorescens.